The sequence spans 251 residues: 2,3-bisphosphoglycerate-dependent phosphoglycerate mutase (251 aa).

Substrate is bound by residues 8 to 15 (RHGESLWN), 21 to 22 (TG), R60, 87 to 90 (ERHY), K98, 114 to 115 (RR), and 183 to 184 (GN). H9 acts as the Tele-phosphohistidine intermediate in catalysis. The Proton donor/acceptor role is filled by E87.

The protein belongs to the phosphoglycerate mutase family. BPG-dependent PGAM subfamily.

It catalyses the reaction (2R)-2-phosphoglycerate = (2R)-3-phosphoglycerate. The protein operates within carbohydrate degradation; glycolysis; pyruvate from D-glyceraldehyde 3-phosphate: step 3/5. Functionally, catalyzes the interconversion of 2-phosphoglycerate and 3-phosphoglycerate. This is 2,3-bisphosphoglycerate-dependent phosphoglycerate mutase from Thermoanaerobacter sp. (strain X514).